We begin with the raw amino-acid sequence, 214 residues long: Large ribosomal subunit protein uL3 (214 aa).

Gln151 carries the post-translational modification N5-methylglutamine.

It belongs to the universal ribosomal protein uL3 family. Part of the 50S ribosomal subunit. Forms a cluster with proteins L14 and L19. In terms of processing, methylated by PrmB.

In terms of biological role, one of the primary rRNA binding proteins, it binds directly near the 3'-end of the 23S rRNA, where it nucleates assembly of the 50S subunit. The sequence is that of Large ribosomal subunit protein uL3 from Magnetococcus marinus (strain ATCC BAA-1437 / JCM 17883 / MC-1).